A 215-amino-acid chain; its full sequence is Urease accessory protein UreG (215 aa).

11 to 18 (GPVGAGKS) is a GTP binding site.

Belongs to the SIMIBI class G3E GTPase family. UreG subfamily. Homodimer. UreD, UreF and UreG form a complex that acts as a GTP-hydrolysis-dependent molecular chaperone, activating the urease apoprotein by helping to assemble the nickel containing metallocenter of UreC. The UreE protein probably delivers the nickel.

It is found in the cytoplasm. Functionally, facilitates the functional incorporation of the urease nickel metallocenter. This process requires GTP hydrolysis, probably effectuated by UreG. This Cenarchaeum symbiosum (strain A) protein is Urease accessory protein UreG.